Consider the following 322-residue polypeptide: CRISPR-associated protein Cas1 1 (322 aa).

Mn(2+) is bound by residues glutamate 149, histidine 214, and glutamate 229.

The protein belongs to the CRISPR-associated endonuclease Cas1 family. Homodimer, forms a heterotetramer with a Cas2 homodimer. It depends on Mg(2+) as a cofactor. Mn(2+) serves as cofactor.

Its function is as follows. CRISPR (clustered regularly interspaced short palindromic repeat), is an adaptive immune system that provides protection against mobile genetic elements (viruses, transposable elements and conjugative plasmids). CRISPR clusters contain spacers, sequences complementary to antecedent mobile elements, and target invading nucleic acids. CRISPR clusters are transcribed and processed into CRISPR RNA (crRNA). Acts as a dsDNA endonuclease. Involved in the integration of spacer DNA into the CRISPR cassette. The polypeptide is CRISPR-associated protein Cas1 1 (Methanobrevibacter ruminantium (strain ATCC 35063 / DSM 1093 / JCM 13430 / OCM 146 / M1) (Methanobacterium ruminantium)).